We begin with the raw amino-acid sequence, 225 residues long: Insulin-induced gene 2 protein (225 aa).

Topologically, residues M1–L28 are cytoplasmic. The helical transmembrane segment at M29–I51 threads the bilayer. At Q52–A70 the chain is on the lumenal side. A helical membrane pass occupies residues W71–Y88. At P89–R103 the chain is on the cytoplasmic side. The helical transmembrane segment at E104–D126 threads the bilayer. At F127–N129 the chain is on the lumenal side. A helical transmembrane segment spans residues N130–F148. Residues D149 to S153 lie on the Cytoplasmic side of the membrane. S151 carries the post-translational modification Phosphoserine. A helical membrane pass occupies residues G154 to N175. Residues G176–R189 are Lumenal-facing. Residues S190–G207 traverse the membrane as a helical segment. Residues R208 to E225 are Cytoplasmic-facing. C215 carries the post-translational modification Cysteine sulfenic acid (-SOH); alternate. C215 participates in a covalent cross-link: Glycyl cysteine thioester (Cys-Gly) (interchain with G-Cter in ubiquitin); alternate. Residues A219–E225 carry the KxHxx motif.

This sequence belongs to the INSIG family. As to quaternary structure, interacts with SCAP; interaction is direct and only takes place in the presence of sterols; it prevents interaction between SCAP and the coat protein complex II (COPII). Associates with the SCAP-SREBP complex (composed of SCAP and SREBF1/SREBP1 or SREBF2/SREBP2); association is mediated via its interaction with SCAP and only takes place in the presence of sterols. Interacts with RNF139. Interacts with RNF145. In terms of processing, phosphorylation at Ser-151 by PCK1 reduces binding to oxysterol, disrupting the interaction between INSIG2 and SCAP, thereby promoting nuclear translocation of SREBP proteins (SREBF1/SREBP1 or SREBF2/SREBP2) and subsequent transcription of downstream lipogenesis-related genes. Polyubiquitinated by AMFR/gp78 at Cys-215 in some tissues such as adipose tissues, undifferentiated myoblasts and liver, leading to its degradation. In differentiated myotubes, Cys-215 oxidation prevents ubiquitination at the same site, resulting in protein stabilization. Post-translationally, oxidized at Cys-215 in differentiated myotubes, preventing ubiquitination at the same site, and resulting in protein stabilization.

The protein resides in the endoplasmic reticulum membrane. In terms of biological role, oxysterol-binding protein that mediates feedback control of cholesterol synthesis by controlling both endoplasmic reticulum to Golgi transport of SCAP and degradation of HMGCR. Acts as a negative regulator of cholesterol biosynthesis by mediating the retention of the SCAP-SREBP complex in the endoplasmic reticulum, thereby blocking the processing of sterol regulatory element-binding proteins (SREBPs) SREBF1/SREBP1 and SREBF2/SREBP2. Binds oxysterol, including 22-hydroxycholesterol, 24-hydroxycholesterol, 25-hydroxycholesterol and 27-hydroxycholesterol, regulating interaction with SCAP and retention of the SCAP-SREBP complex in the endoplasmic reticulum. In presence of oxysterol, interacts with SCAP, retaining the SCAP-SREBP complex in the endoplasmic reticulum, thereby preventing SCAP from escorting SREBF1/SREBP1 and SREBF2/SREBP2 to the Golgi. Sterol deprivation or phosphorylation by PCK1 reduce oxysterol-binding, disrupting the interaction between INSIG2 and SCAP, thereby promoting Golgi transport of the SCAP-SREBP complex, followed by processing and nuclear translocation of SREBF1/SREBP1 and SREBF2/SREBP2. Also regulates cholesterol synthesis by regulating degradation of HMGCR: initiates the sterol-mediated ubiquitin-mediated endoplasmic reticulum-associated degradation (ERAD) of HMGCR via recruitment of the reductase to the ubiquitin ligase RNF139. This is Insulin-induced gene 2 protein from Sus scrofa (Pig).